The chain runs to 553 residues: MRSDTITQGLERTPHRALLKGTGLPQSEMGKPFIGIATSFTDLIPGHVGMRDLERFIEKGVHTGGGYSFFFGIPGVCDGISMGHKGMHYSLPTRELIADMVESVAEAHRLDGLVLLTNCDKITPGMLMAAARLDIPCIVVTAGPMMSGRGDAGRKYSFVTDTFEAMARYKAGVIDDAELARCEENACPGMGSCQGLFTANTMAILTETLGMSLPRCGTALAVSALKRRIAFASGERIVDLVRQNITPRSIMTREAFENAIRVDLALGGSSNTVLHLLAIAHEAGVELPLETFDILAKETPQLASMNPAGEHFMEDLDVAGGVAGVLKQLGDKIHDCPTLMGLSTKEIAASLKGVDEEVIHPLSNPVKKEGGIAVLFGNICPKGAVVKQSGVSDQMMKFTGTARCFDSEDKAMAAMMGGVVKGGDVVVIRYEGPKGGPGMREMLAPTAALMGLGLGDSVALITDGRFSGGTRGPCIGHIAPEAAAGGPIAFIEDGDTIELDIPARSLKVMVSDEVLAERRARWVAPEPKIKKGWLARYAKVVTSAHTGAITTAE.

Asp-78 lines the Mg(2+) pocket. Cys-119 provides a ligand contact to [2Fe-2S] cluster. Mg(2+)-binding residues include Asp-120 and Lys-121. Lys-121 bears the N6-carboxylysine mark. Residue Cys-193 participates in [2Fe-2S] cluster binding. Glu-441 serves as a coordination point for Mg(2+). Catalysis depends on Ser-467, which acts as the Proton acceptor.

Belongs to the IlvD/Edd family. As to quaternary structure, homodimer. Requires [2Fe-2S] cluster as cofactor. Mg(2+) is required as a cofactor.

The catalysed reaction is (2R)-2,3-dihydroxy-3-methylbutanoate = 3-methyl-2-oxobutanoate + H2O. It carries out the reaction (2R,3R)-2,3-dihydroxy-3-methylpentanoate = (S)-3-methyl-2-oxopentanoate + H2O. The protein operates within amino-acid biosynthesis; L-isoleucine biosynthesis; L-isoleucine from 2-oxobutanoate: step 3/4. It participates in amino-acid biosynthesis; L-valine biosynthesis; L-valine from pyruvate: step 3/4. Its function is as follows. Functions in the biosynthesis of branched-chain amino acids. Catalyzes the dehydration of (2R,3R)-2,3-dihydroxy-3-methylpentanoate (2,3-dihydroxy-3-methylvalerate) into 2-oxo-3-methylpentanoate (2-oxo-3-methylvalerate) and of (2R)-2,3-dihydroxy-3-methylbutanoate (2,3-dihydroxyisovalerate) into 2-oxo-3-methylbutanoate (2-oxoisovalerate), the penultimate precursor to L-isoleucine and L-valine, respectively. The chain is Dihydroxy-acid dehydratase from Geobacter sp. (strain M21).